A 423-amino-acid polypeptide reads, in one-letter code: Adenylosuccinate synthetase (423 aa).

GTP-binding positions include 12 to 18 and 40 to 42; these read GDEGKGK and GHT. The Proton acceptor role is filled by Asp-13. Mg(2+) contacts are provided by Asp-13 and Gly-40. IMP contacts are provided by residues 13-16, 38-41, Thr-129, Arg-143, Gln-224, Thr-239, and Arg-303; these read DEGK and NAGH. The active-site Proton donor is the His-41. Position 299-305 (299-305) interacts with substrate; that stretch reads ATTGRKR. Residues Arg-305, 331–333, and 412–414 contribute to the GTP site; these read KGD and SVG.

Belongs to the adenylosuccinate synthetase family. As to quaternary structure, homodimer. The cofactor is Mg(2+).

The protein resides in the cytoplasm. It catalyses the reaction IMP + L-aspartate + GTP = N(6)-(1,2-dicarboxyethyl)-AMP + GDP + phosphate + 2 H(+). It participates in purine metabolism; AMP biosynthesis via de novo pathway; AMP from IMP: step 1/2. In terms of biological role, plays an important role in the de novo pathway of purine nucleotide biosynthesis. Catalyzes the first committed step in the biosynthesis of AMP from IMP. The chain is Adenylosuccinate synthetase from Christiangramia forsetii (strain DSM 17595 / CGMCC 1.15422 / KT0803) (Gramella forsetii).